The following is a 510-amino-acid chain: NAD(P)H-quinone oxidoreductase subunit 2 B, chloroplastic (510 aa).

The next 13 helical transmembrane spans lie at 24 to 44 (LLLFDGSFIFPECILIFGLIL), 57 to 77 (IPWLYFISSTSLVMSITALLF), 99 to 119 (IFQFLILLCSTLCIPLSVEYI), 124 to 144 (MAIAEFLLFVLTATLGGMFLC), 149 to 169 (LITIFVAPECFSLCSYLLSGY), 183 to 203 (YLLMGGASSSILVHGFSWLYG), 227 to 247 (PGISIALIFITVGIGFKLSPA), 295 to 315 (WHLLLEILAILSMILGNLIAI), 323 to 343 (MLAYSSIGQIGYVIIGIIVGN), 354 to 374 (YMLFYISMNLGTFACIVLFGL), 395 to 415 (ALSLAPCLLSLGGLPPLAGFF), 418 to 438 (LHLFWCGWQAGLYFLVSIGLL), and 484 to 504 (MIVCVIASTIPGISMNPIIAI).

It belongs to the complex I subunit 2 family. As to quaternary structure, NDH is composed of at least 16 different subunits, 5 of which are encoded in the nucleus.

The protein localises to the plastid. Its subcellular location is the chloroplast thylakoid membrane. It carries out the reaction a plastoquinone + NADH + (n+1) H(+)(in) = a plastoquinol + NAD(+) + n H(+)(out). The enzyme catalyses a plastoquinone + NADPH + (n+1) H(+)(in) = a plastoquinol + NADP(+) + n H(+)(out). NDH shuttles electrons from NAD(P)H:plastoquinone, via FMN and iron-sulfur (Fe-S) centers, to quinones in the photosynthetic chain and possibly in a chloroplast respiratory chain. The immediate electron acceptor for the enzyme in this species is believed to be plastoquinone. Couples the redox reaction to proton translocation, and thus conserves the redox energy in a proton gradient. The polypeptide is NAD(P)H-quinone oxidoreductase subunit 2 B, chloroplastic (Gossypium barbadense (Sea Island cotton)).